We begin with the raw amino-acid sequence, 206 residues long: Small ribosomal subunit protein uS4 (206 aa).

The 62-residue stretch at 96-157 (SRLDNVVYRM…KAKNQARIQN (62 aa)) folds into the S4 RNA-binding domain.

It belongs to the universal ribosomal protein uS4 family. As to quaternary structure, part of the 30S ribosomal subunit. Contacts protein S5. The interaction surface between S4 and S5 is involved in control of translational fidelity.

In terms of biological role, one of the primary rRNA binding proteins, it binds directly to 16S rRNA where it nucleates assembly of the body of the 30S subunit. Its function is as follows. With S5 and S12 plays an important role in translational accuracy. This Chromohalobacter salexigens (strain ATCC BAA-138 / DSM 3043 / CIP 106854 / NCIMB 13768 / 1H11) protein is Small ribosomal subunit protein uS4.